Here is a 274-residue protein sequence, read N- to C-terminus: Putative pyruvate, phosphate dikinase regulatory protein 1 (274 aa).

Residue 149–156 (GISRTSKT) participates in ADP binding.

Belongs to the pyruvate, phosphate/water dikinase regulatory protein family. PDRP subfamily.

It carries out the reaction N(tele)-phospho-L-histidyl/L-threonyl-[pyruvate, phosphate dikinase] + ADP = N(tele)-phospho-L-histidyl/O-phospho-L-threonyl-[pyruvate, phosphate dikinase] + AMP + H(+). The catalysed reaction is N(tele)-phospho-L-histidyl/O-phospho-L-threonyl-[pyruvate, phosphate dikinase] + phosphate + H(+) = N(tele)-phospho-L-histidyl/L-threonyl-[pyruvate, phosphate dikinase] + diphosphate. In terms of biological role, bifunctional serine/threonine kinase and phosphorylase involved in the regulation of the pyruvate, phosphate dikinase (PPDK) by catalyzing its phosphorylation/dephosphorylation. This chain is Putative pyruvate, phosphate dikinase regulatory protein 1, found in Listeria monocytogenes serotype 4b (strain F2365).